The sequence spans 2216 residues: RNA-directed RNA polymerase L (2216 aa).

Positions 26 to 289 (KTSFLSQVNL…ETRTAMLDER (264 aa)) are endonuclease. Mn(2+) is bound by residues Glu51, Asp88, and Glu101. Lys114 is a catalytic residue. Positions 1167 to 1364 (LDMKCVVRLS…YLSSKFNKFV (198 aa)) constitute a RdRp catalytic domain. Position 1323 (Asp1323) interacts with Mg(2+).

This sequence belongs to the Bunyavirales RNA polymerase family. Homomultimer; the oligomeric structure is essential for the polymerase activity. Interacts with nucleoprotein N. Interacts with protein Z; this interaction inhibits viral transcription and replication, Z partially blocks the product exit tunnel for the releasing nascent RNA product. It depends on Mn(2+) as a cofactor. The cofactor is Mg(2+).

It is found in the virion. Its subcellular location is the host cytoplasm. It catalyses the reaction RNA(n) + a ribonucleoside 5'-triphosphate = RNA(n+1) + diphosphate. Functionally, RNA-dependent RNA polymerase, which is responsible for the replication and transcription of the viral RNA genome using antigenomic RNA as an intermediate. During transcription, synthesizes subgenomic RNAs and assures their capping by a cap-snatching mechanism, which involves the endonuclease activity cleaving the host capped pre-mRNAs. These short capped RNAs are then used as primers for viral transcription. The 3'-end of subgenomic mRNAs molecules are heterogeneous and not polyadenylated. The replicase function is to direct synthesis of antigenomic and genomic RNA which are encapsidated and non capped. As a consequence of the use of the same enzyme for both transcription and replication, these mechanisms need to be well coordinated. These processes may be regulated by proteins N and Z in a dose-dependent manner. Z protein inhibits the viral polymerase L und thus the viral transcription and RNA synthesis. This is RNA-directed RNA polymerase L from Bear Canyon mammarenavirus (isolate Mouse/United States/AV A0070039/2000) (BCNV).